A 245-amino-acid chain; its full sequence is DNA polymerase sliding clamp (245 aa).

This sequence belongs to the PCNA family. As to quaternary structure, homotrimer. The subunits circularize to form a toroid; DNA passes through its center. Replication factor C (RFC) is required to load the toroid on the DNA.

Its function is as follows. Sliding clamp subunit that acts as a moving platform for DNA processing. Responsible for tethering the catalytic subunit of DNA polymerase and other proteins to DNA during high-speed replication. This is DNA polymerase sliding clamp from Picrophilus torridus (strain ATCC 700027 / DSM 9790 / JCM 10055 / NBRC 100828 / KAW 2/3).